We begin with the raw amino-acid sequence, 195 residues long: Probable cobalt-precorrin-6B C(15)-methyltransferase (decarboxylating) (195 aa).

S-adenosyl-L-methionine is bound by residues Thr-24, 48 to 52 (GCGTG), Asp-72, and Ala-101.

It belongs to the methyltransferase superfamily. Archaeal-type CbiT family.

The enzyme catalyses Co-precorrin-6B + S-adenosyl-L-methionine = Co-precorrin-7 + S-adenosyl-L-homocysteine + CO2. It participates in cofactor biosynthesis; adenosylcobalamin biosynthesis; cob(II)yrinate a,c-diamide from sirohydrochlorin (anaerobic route): step 8/10. Catalyzes the methylation of C-15 in cobalt-precorrin-6B followed by the decarboxylation of C-12 to form cobalt-precorrin-7. This Pyrobaculum calidifontis (strain DSM 21063 / JCM 11548 / VA1) protein is Probable cobalt-precorrin-6B C(15)-methyltransferase (decarboxylating).